The primary structure comprises 547 residues: MFS-type transporter M6 (547 aa).

The disordered stretch occupies residues 1-45; the sequence is MHRRRRDNLMTPAEMVASMKPPQSLSTEDDDGSRRDSESSADVLK. The chain crosses the membrane as a helical span at residues 81–101; that stretch reads VLVVASFAAAISPFSTSTYYP. N118 carries an N-linked (GlcNAc...) asparagine glycan. Residues 146 to 166 traverse the membrane as a helical segment; the sequence is PMFLVCFAIYFVANVGLALQN. N-linked (GlcNAc...) asparagine glycosylation is present at N167. 2 consecutive transmembrane segments (helical) span residues 206–226 and 236–256; these read LIYA…IGGL and VFWF…IFFG. N274 carries an N-linked (GlcNAc...) asparagine glycan. 5 consecutive transmembrane segments (helical) span residues 317 to 337, 347 to 367, 407 to 427, 432 to 452, and 469 to 489; these read FILS…TSVL, YDAV…LLAY, LGFV…YGWQ, APLA…TGVM, and AVGA…VAVV. Residue N493 is glycosylated (N-linked (GlcNAc...) asparagine). Residues 496–516 form a helical membrane-spanning segment; the sequence is AGIGWTATVTAGLWVLMMPTL.

It belongs to the major facilitator superfamily. CAR1 family.

The protein resides in the membrane. Functionally, MFS-type transporter; part of the gene cluster that mediates the biosynthesis of squalestatin S1 (SQS1, also known as zaragozic acid A), a heavily oxidized fungal polyketide that offers potent cholesterol lowering activity by targeting squalene synthase (SS). This is MFS-type transporter M6 from Phoma sp. (strain ATCC 20986 / MF5453).